The sequence spans 138 residues: NADPH-dependent 7-cyano-7-deazaguanine reductase (138 aa).

Cys-53 serves as the catalytic Thioimide intermediate. The Proton donor role is filled by Asp-60. Substrate contacts are provided by residues 75–77 (VEL) and 94–95 (HE).

The protein belongs to the GTP cyclohydrolase I family. QueF type 1 subfamily.

The protein resides in the cytoplasm. The enzyme catalyses 7-aminomethyl-7-carbaguanine + 2 NADP(+) = 7-cyano-7-deazaguanine + 2 NADPH + 3 H(+). The protein operates within tRNA modification; tRNA-queuosine biosynthesis. Catalyzes the NADPH-dependent reduction of 7-cyano-7-deazaguanine (preQ0) to 7-aminomethyl-7-deazaguanine (preQ1). This Gloeothece citriformis (strain PCC 7424) (Cyanothece sp. (strain PCC 7424)) protein is NADPH-dependent 7-cyano-7-deazaguanine reductase.